A 248-amino-acid chain; its full sequence is Large ribosomal subunit protein uL30A (248 aa).

Positions 1–44 (MSQKKQKIQVEQKVPENVAKKTQRDSKLRDAVAKRRTERLAANK) are disordered. Over residues 8–41 (IQVEQKVPENVAKKTQRDSKLRDAVAKRRTERLA) the composition is skewed to basic and acidic residues.

The protein belongs to the universal ribosomal protein uL30 family.

In terms of biological role, binds to G-rich structures in 28S rRNA and in mRNAs. Plays a regulatory role in the translation apparatus; inhibits cell-free translation of mRNAs. The chain is Large ribosomal subunit protein uL30A (Rpl7-1) from Paramecium tetraurelia.